A 156-amino-acid chain; its full sequence is Eosinophil cationic protein 2 (156 aa).

An N-terminal signal peptide occupies residues 1–25 (MGPKLLESRLCLLLLLGLVLMLASC). The active-site Proton acceptor is the histidine 38. 4 disulfides stabilise this stretch: cysteine 47–cysteine 106, cysteine 61–cysteine 119, cysteine 79–cysteine 134, and cysteine 86–cysteine 94. Substrate is bound at residue 62–66 (KGLNT). N-linked (GlcNAc...) asparagine glycans are attached at residues asparagine 89, asparagine 96, and asparagine 107. Histidine 151 serves as the catalytic Proton donor.

It belongs to the pancreatic ribonuclease family.

Its subcellular location is the cytoplasmic granule. Its function is as follows. Cytotoxin and helminthotoxin with ribonuclease activity. Selectively chemotactic for dendritic cells. Possesses a wide variety of biological activities. The protein is Eosinophil cationic protein 2 (Ear2) of Mus musculus (Mouse).